The sequence spans 215 residues: Ras-related protein Rab-5A (215 aa).

S29, A30, G32, K33, S34, S35, H46, E47, T52, and G78 together coordinate GTP. S34 lines the Mg(2+) pocket. 2 consecutive short sequence motifs (switch) follow at residues Q44–A56 and A77–A93. T52 serves as a coordination point for Mg(2+). S84 carries the phosphoserine modification. GTP-binding residues include N133, K134, D136, A164, and K165. Residues L181 to N215 are disordered. 2 S-geranylgeranyl cysteine lipidation sites follow: C212 and C213.

Belongs to the small GTPase superfamily. Rab family. As to quaternary structure, interacts with GDI1; this promotes dissociation from membranes; phosphorylation at Ser-84 disrupts this interaction. Interacts with GDI2; phosphorylation at Ser-84 disrupts the interaction. Interacts with EEA1. Interacts with RIN1 and GAPVD1, which regulate its pathway, probably by acting as a GEF. Interacts with ALS2CL, SUN2, ZFYVE20 and RUFY1. Interacts with RABEP1; one RABEP1 homodimer binds two RAB5A chains, but at opposite sides of the dimer. Interacts with SGSM1, SGSM3 and PIK3CB. Interacts with RINL. May be a component of a complex composed of RAB5A, DYN2 and PIK3C3. Does not interact with the BLOC-3 complex (heterodimer of HPS1 and HPS4). Interacts with CLN5. Interacts with APPL2. Interacts with F8A1/F8A2/F8A3. Found in a complex with F8A1/F8A2/F8A3, HTT and RAB5A; mediates the recruitment of HTT by RAB5A onto early endosomes. Interacts with ATP9A. Interacts with PPP1R21; mediates the recruitment of FERRY complex by RAB5A onto early endosomes. Mg(2+) serves as cofactor. Phosphorylation of Ser-84 in the switch II region by LRRK2 prevents the association of RAB regulatory proteins, including RAB GDP dissociation inhibitors GDI1 and GDI2.

Its subcellular location is the cell membrane. The protein localises to the early endosome membrane. The protein resides in the melanosome. It localises to the cytoplasmic vesicle. It is found in the cell projection. Its subcellular location is the ruffle. The protein localises to the membrane. The protein resides in the cytoplasm. It localises to the cytosol. It is found in the phagosome membrane. Its subcellular location is the endosome membrane. The enzyme catalyses GTP + H2O = GDP + phosphate + H(+). With respect to regulation, regulated by guanine nucleotide exchange factors (GEFs) including RINL, which promote the exchange of bound GDP for free GTP. Regulated by GTPase activating proteins (GAPs) which increase the GTP hydrolysis activity. Inhibited by GDP dissociation inhibitors (GDIs). The small GTPases Rab are key regulators of intracellular membrane trafficking, from the formation of transport vesicles to their fusion with membranes. Rabs cycle between an inactive GDP-bound form and an active GTP-bound form that is able to recruit to membranes different sets of downstream effectors directly responsible for vesicle formation, movement, tethering and fusion. RAB5A is required for the fusion of plasma membranes and early endosomes. Contributes to the regulation of filopodia extension. Required for the exosomal release of SDCBP, CD63, PDCD6IP and syndecan. Regulates maturation of apoptotic cell-containing phagosomes, probably downstream of DYN2 and PIK3C3. The chain is Ras-related protein Rab-5A from Rattus norvegicus (Rat).